The chain runs to 159 residues: Ribosomal RNA large subunit methyltransferase H (159 aa).

Residues glycine 108 and 127–132 (FSKMTF) contribute to the S-adenosyl-L-methionine site.

Belongs to the RNA methyltransferase RlmH family. In terms of assembly, homodimer.

It localises to the cytoplasm. It catalyses the reaction pseudouridine(1915) in 23S rRNA + S-adenosyl-L-methionine = N(3)-methylpseudouridine(1915) in 23S rRNA + S-adenosyl-L-homocysteine + H(+). In terms of biological role, specifically methylates the pseudouridine at position 1915 (m3Psi1915) in 23S rRNA. The chain is Ribosomal RNA large subunit methyltransferase H from Clostridium acetobutylicum (strain ATCC 824 / DSM 792 / JCM 1419 / IAM 19013 / LMG 5710 / NBRC 13948 / NRRL B-527 / VKM B-1787 / 2291 / W).